The sequence spans 924 residues: Probable dipeptidyl-aminopeptidase B (924 aa).

The segment covering 1 to 12 has biased composition (polar residues); sequence MPSTYSDDNTLR. The segment at 1 to 102 is disordered; that stretch reads MPSTYSDDNT…RSNQRSSADG (102 aa). Residues 1-111 are Cytoplasmic-facing; sequence MPSTYSDDNT…GQRMDRSLRR (111 aa). Positions 14-23 are enriched in basic and acidic residues; that stretch reads GLDRFRDHSP. Residues 31–43 are compositionally biased toward polar residues; sequence SQETDSTVSTTSI. Residues 47 to 58 are compositionally biased toward basic and acidic residues; the sequence is RIQERLDTKEFP. Over residues 87–100 the composition is skewed to low complexity; it reads NASPSSRSNQRSSA. The chain crosses the membrane as a helical; Signal-anchor for type II membrane protein span at residues 112 to 132; that stretch reads WLFIVSGALVATWVIGLIFFV. At 133–924 the chain is on the vacuolar side; it reads SSKAYKPSSS…GMKRRALPTA (792 aa). N-linked (GlcNAc...) asparagine glycosylation is found at N231 and N364. S768 (charge relay system) is an active-site residue. N-linked (GlcNAc...) asparagine glycosylation is present at N827. Catalysis depends on charge relay system residues D845 and H878.

It belongs to the peptidase S9B family.

Its subcellular location is the vacuole membrane. The enzyme catalyses Release of an N-terminal dipeptide, Xaa-Yaa-|-Zaa-, from a polypeptide, preferentially when Yaa is Pro, provided Zaa is neither Pro nor hydroxyproline.. Functionally, type IV dipeptidyl-peptidase which removes N-terminal dipeptides sequentially from polypeptides having unsubstituted N-termini provided that the penultimate residue is proline. The polypeptide is Probable dipeptidyl-aminopeptidase B (dapB) (Neurospora crassa (strain ATCC 24698 / 74-OR23-1A / CBS 708.71 / DSM 1257 / FGSC 987)).